The following is a 134-amino-acid chain: Profilin-2 (134 aa).

A disulfide bond links Cys13 and Cys118. Positions 84–100 match the Involved in PIP2 interaction motif; sequence AVIRGKKGSGGITIKKT. Thr114 is subject to Phosphothreonine.

The protein belongs to the profilin family. Occurs in many kinds of cells as a complex with monomeric actin in a 1:1 ratio. Post-translationally, phosphorylated by MAP kinases.

It localises to the cytoplasm. Its subcellular location is the cytoskeleton. Functionally, binds to actin and affects the structure of the cytoskeleton. At high concentrations, profilin prevents the polymerization of actin, whereas it enhances it at low concentrations. The sequence is that of Profilin-2 from Olea europaea (Common olive).